Here is a 234-residue protein sequence, read N- to C-terminus: 2-hydroxy-3-keto-5-methylthiopentenyl-1-phosphate phosphatase (234 aa).

It belongs to the HAD-like hydrolase superfamily. MtnX family.

It carries out the reaction 2-hydroxy-5-methylsulfanyl-3-oxopent-1-enyl phosphate + H2O = 1,2-dihydroxy-5-(methylsulfanyl)pent-1-en-3-one + phosphate. Its pathway is amino-acid biosynthesis; L-methionine biosynthesis via salvage pathway; L-methionine from S-methyl-5-thio-alpha-D-ribose 1-phosphate: step 4/6. Dephosphorylates 2-hydroxy-3-keto-5-methylthiopentenyl-1-phosphate (HK-MTPenyl-1-P) yielding 1,2-dihydroxy-3-keto-5-methylthiopentene (DHK-MTPene). This Bacillus velezensis (strain DSM 23117 / BGSC 10A6 / LMG 26770 / FZB42) (Bacillus amyloliquefaciens subsp. plantarum) protein is 2-hydroxy-3-keto-5-methylthiopentenyl-1-phosphate phosphatase.